A 609-amino-acid chain; its full sequence is Phosphoenolpyruvate carboxykinase [GTP] (609 aa).

Substrate is bound by residues Arg81 and 220 to 222 (YGG). Mn(2+) contacts are provided by Lys229 and His249. Residue Ser271 participates in substrate binding. GTP is bound at residue 272–277 (ACGKTN). Residue Cys273 is part of the active site. Asp296 is a Mn(2+) binding site. 387-389 (NSR) is a binding site for substrate. GTP contacts are provided by residues Arg389, Arg420, and 515 to 518 (FGEN).

The protein belongs to the phosphoenolpyruvate carboxykinase [GTP] family. In terms of assembly, monomer. It depends on Mn(2+) as a cofactor.

It is found in the cytoplasm. It catalyses the reaction oxaloacetate + GTP = phosphoenolpyruvate + GDP + CO2. Its pathway is carbohydrate biosynthesis; gluconeogenesis. Its function is as follows. Catalyzes the conversion of oxaloacetate (OAA) to phosphoenolpyruvate (PEP), the rate-limiting step in the metabolic pathway that produces glucose from lactate and other precursors derived from the citric acid cycle. The protein is Phosphoenolpyruvate carboxykinase [GTP] of Mycobacterium marinum (strain ATCC BAA-535 / M).